Consider the following 1013-residue polypeptide: Hemoglobin-binding protein A (1013 aa).

The signal sequence occupies residues 1 to 24 (MTNFKFSLLACSIAFALNASTAYA). 8 repeat units span residues 26-29 (QPTN), 30-33 (QPTN), 34-37 (QPTN), 38-41 (QPTN), 42-45 (QPTN), 46-49 (QPTN), 50-53 (QPTN), and 54-57 (QPTN). The 8 X 4 AA tandem repeats of Q-P-T-N stretch occupies residues 26–57 (QPTNQPTNQPTNQPTNQPTNQPTNQPTNQPTN). Residues 26–58 (QPTNQPTNQPTNQPTNQPTNQPTNQPTNQPTNQ) show a composition bias toward low complexity. The segment at 26–61 (QPTNQPTNQPTNQPTNQPTNQPTNQPTNQPTNQDSN) is disordered. The TonB box motif lies at 67-74 (EQINVSGS). The TBDR plug domain maps to 78–205 (SDSKTPPKIA…LGGSVIYKTK (128 aa)). Residues 213 to 1013 (NKDYYVSYKK…NYKMSVQFEF (801 aa)) form the TBDR beta-barrel domain. A TonB C-terminal box motif is present at residues 996-1013 (NRFYAPGRNYKMSVQFEF).

Belongs to the TonB-dependent receptor family. Hemoglobin/haptoglobin binding protein subfamily.

It localises to the cell outer membrane. In terms of biological role, acts as a receptor for hemoglobin of the human host and is required for heme uptake. The chain is Hemoglobin-binding protein A (hgbA) from Haemophilus influenzae.